A 364-amino-acid chain; its full sequence is Peptidoglycan transport system permease protein YejB (364 aa).

Helical transmembrane passes span 9 to 29 (LALM…VIQF), 134 to 154 (SASL…PLGI), 171 to 191 (IIII…IVLF), 219 to 239 (IIDY…SAFA), 283 to 303 (IVIA…SLLI), and 325 to 345 (YPIV…VGLL). The ABC transmembrane type-1 domain maps to 131 to 350 (LPVSASLGFW…VVGLLSDLIY (220 aa)).

It belongs to the binding-protein-dependent transport system permease family. As to quaternary structure, the complex is composed of one ATP-binding protein (YejF), two transmembrane proteins (YejB and YejE) and a solute-binding protein (YepA or YejA).

The protein localises to the cell inner membrane. Its function is as follows. Part of the ABC transporter complex YejBEF-YepA involved in the uptake of muropeptides, the breakdown products of cell wall peptidoglycan. The import of muropeptides into the cell enables peptidoglycan recycling, which is vital for cell wall integrity in this bacterium. Is also probably part of the ABC transporter complex YejABEF, which is likely involved in broad-spectrum peptide import. Responsible for the translocation of the substrate across the membrane. The polypeptide is Peptidoglycan transport system permease protein YejB (Agrobacterium fabrum (strain C58 / ATCC 33970) (Agrobacterium tumefaciens (strain C58))).